The chain runs to 160 residues: Cytochrome b6-f complex subunit 4 (160 aa).

The next 3 helical transmembrane spans lie at 36–56, 95–115, and 128–148; these read LLYI…GLAV, LLGI…PFIE, and IAMA…IGAC.

Belongs to the cytochrome b family. PetD subfamily. In terms of assembly, the 4 large subunits of the cytochrome b6-f complex are cytochrome b6, subunit IV (17 kDa polypeptide, PetD), cytochrome f and the Rieske protein, while the 4 small subunits are PetG, PetL, PetM and PetN. The complex functions as a dimer.

The protein resides in the cellular thylakoid membrane. Its function is as follows. Component of the cytochrome b6-f complex, which mediates electron transfer between photosystem II (PSII) and photosystem I (PSI), cyclic electron flow around PSI, and state transitions. This is Cytochrome b6-f complex subunit 4 from Prochlorococcus marinus (strain MIT 9313).